The chain runs to 148 residues: Short form salivary protein D7S1 (148 aa).

Residues 1 to 21 (MKQNVFFLIAYFSLVFCMCNA) form the signal peptide. 3 cysteine pairs are disulfide-bonded: cysteine 28–cysteine 61, cysteine 41–cysteine 147, and cysteine 103–cysteine 119.

Belongs to the PBP/GOBP family. As to expression, female salivary gland.

The protein localises to the secreted. In terms of biological role, in contrast to the related D7 salivary proteins that can bind biogenic amines, does not bind serotonin. This chain is Short form salivary protein D7S1, found in Aedes aegypti (Yellowfever mosquito).